The following is a 209-amino-acid chain: Probable septum site-determining protein MinC (209 aa).

It belongs to the MinC family. As to quaternary structure, interacts with MinD and FtsZ.

In terms of biological role, cell division inhibitor that blocks the formation of polar Z ring septums. Rapidly oscillates between the poles of the cell to destabilize FtsZ filaments that have formed before they mature into polar Z rings. Prevents FtsZ polymerization. In Clostridium kluyveri (strain NBRC 12016), this protein is Probable septum site-determining protein MinC.